The following is a 275-amino-acid chain: Thiazole synthase (275 aa).

The Schiff-base intermediate with DXP role is filled by K108. 1-deoxy-D-xylulose 5-phosphate contacts are provided by residues G169, 196–197 (AG), and 218–219 (NT).

The protein belongs to the ThiG family. In terms of assembly, homotetramer. Forms heterodimers with either ThiH or ThiS.

It is found in the cytoplasm. The enzyme catalyses [ThiS sulfur-carrier protein]-C-terminal-Gly-aminoethanethioate + 2-iminoacetate + 1-deoxy-D-xylulose 5-phosphate = [ThiS sulfur-carrier protein]-C-terminal Gly-Gly + 2-[(2R,5Z)-2-carboxy-4-methylthiazol-5(2H)-ylidene]ethyl phosphate + 2 H2O + H(+). It participates in cofactor biosynthesis; thiamine diphosphate biosynthesis. In terms of biological role, catalyzes the rearrangement of 1-deoxy-D-xylulose 5-phosphate (DXP) to produce the thiazole phosphate moiety of thiamine. Sulfur is provided by the thiocarboxylate moiety of the carrier protein ThiS. In vitro, sulfur can be provided by H(2)S. The sequence is that of Thiazole synthase from Ralstonia nicotianae (strain ATCC BAA-1114 / GMI1000) (Ralstonia solanacearum).